The following is a 337-amino-acid chain: 4-hydroxy-3-methylbut-2-enyl diphosphate reductase (337 aa).

Cysteine 25 is a [4Fe-4S] cluster binding site. Histidine 54 and histidine 87 together coordinate (2E)-4-hydroxy-3-methylbut-2-enyl diphosphate. 2 residues coordinate dimethylallyl diphosphate: histidine 54 and histidine 87. 2 residues coordinate isopentenyl diphosphate: histidine 54 and histidine 87. Residue cysteine 109 participates in [4Fe-4S] cluster binding. A (2E)-4-hydroxy-3-methylbut-2-enyl diphosphate-binding site is contributed by histidine 137. Histidine 137 contacts dimethylallyl diphosphate. Histidine 137 lines the isopentenyl diphosphate pocket. The Proton donor role is filled by glutamate 139. Threonine 177 lines the (2E)-4-hydroxy-3-methylbut-2-enyl diphosphate pocket. Cysteine 207 lines the [4Fe-4S] cluster pocket. Serine 235, serine 236, asparagine 237, and serine 280 together coordinate (2E)-4-hydroxy-3-methylbut-2-enyl diphosphate. Residues serine 235, serine 236, asparagine 237, and serine 280 each coordinate dimethylallyl diphosphate. Residues serine 235, serine 236, asparagine 237, and serine 280 each contribute to the isopentenyl diphosphate site.

Belongs to the IspH family. Requires [4Fe-4S] cluster as cofactor.

The catalysed reaction is isopentenyl diphosphate + 2 oxidized [2Fe-2S]-[ferredoxin] + H2O = (2E)-4-hydroxy-3-methylbut-2-enyl diphosphate + 2 reduced [2Fe-2S]-[ferredoxin] + 2 H(+). It catalyses the reaction dimethylallyl diphosphate + 2 oxidized [2Fe-2S]-[ferredoxin] + H2O = (2E)-4-hydroxy-3-methylbut-2-enyl diphosphate + 2 reduced [2Fe-2S]-[ferredoxin] + 2 H(+). Its pathway is isoprenoid biosynthesis; dimethylallyl diphosphate biosynthesis; dimethylallyl diphosphate from (2E)-4-hydroxy-3-methylbutenyl diphosphate: step 1/1. It participates in isoprenoid biosynthesis; isopentenyl diphosphate biosynthesis via DXP pathway; isopentenyl diphosphate from 1-deoxy-D-xylulose 5-phosphate: step 6/6. Catalyzes the conversion of 1-hydroxy-2-methyl-2-(E)-butenyl 4-diphosphate (HMBPP) into a mixture of isopentenyl diphosphate (IPP) and dimethylallyl diphosphate (DMAPP). Acts in the terminal step of the DOXP/MEP pathway for isoprenoid precursor biosynthesis. In Leifsonia xyli subsp. xyli (strain CTCB07), this protein is 4-hydroxy-3-methylbut-2-enyl diphosphate reductase.